The sequence spans 212 residues: dITP/XTP pyrophosphatase (212 aa).

7 to 12 (SNNAKK) contacts substrate. Residues E39 and D68 each coordinate Mg(2+). D68 acts as the Proton acceptor in catalysis. Substrate-binding positions include S69, 165–168 (FGYD), K188, and 193–194 (HR).

Belongs to the HAM1 NTPase family. In terms of assembly, homodimer. The cofactor is Mg(2+).

The catalysed reaction is XTP + H2O = XMP + diphosphate + H(+). The enzyme catalyses dITP + H2O = dIMP + diphosphate + H(+). It carries out the reaction ITP + H2O = IMP + diphosphate + H(+). Functionally, pyrophosphatase that catalyzes the hydrolysis of nucleoside triphosphates to their monophosphate derivatives, with a high preference for the non-canonical purine nucleotides XTP (xanthosine triphosphate), dITP (deoxyinosine triphosphate) and ITP. Seems to function as a house-cleaning enzyme that removes non-canonical purine nucleotides from the nucleotide pool, thus preventing their incorporation into DNA/RNA and avoiding chromosomal lesions. The chain is dITP/XTP pyrophosphatase from Leptothrix cholodnii (strain ATCC 51168 / LMG 8142 / SP-6) (Leptothrix discophora (strain SP-6)).